Consider the following 208-residue polypeptide: Protein-L-isoaspartate O-methyltransferase (208 aa).

S59 is a catalytic residue.

The protein belongs to the methyltransferase superfamily. L-isoaspartyl/D-aspartyl protein methyltransferase family.

It is found in the cytoplasm. The catalysed reaction is [protein]-L-isoaspartate + S-adenosyl-L-methionine = [protein]-L-isoaspartate alpha-methyl ester + S-adenosyl-L-homocysteine. Catalyzes the methyl esterification of L-isoaspartyl residues in peptides and proteins that result from spontaneous decomposition of normal L-aspartyl and L-asparaginyl residues. It plays a role in the repair and/or degradation of damaged proteins. In Pectobacterium atrosepticum (strain SCRI 1043 / ATCC BAA-672) (Erwinia carotovora subsp. atroseptica), this protein is Protein-L-isoaspartate O-methyltransferase.